The following is a 217-amino-acid chain: uncharacterized protein (217 aa).

6 consecutive transmembrane segments (helical) span residues 13–35, 50–68, 75–94, 109–131, 152–174, and 194–216; these read IWLT…IALL, FSLV…ILYL, FLLA…EWRI, MMAL…LFSL, YLAI…AAAV, and GFSL…FAGL.

The protein localises to the cell membrane. This is an uncharacterized protein from Archaeoglobus fulgidus (strain ATCC 49558 / DSM 4304 / JCM 9628 / NBRC 100126 / VC-16).